The primary structure comprises 1712 residues: U3 small nucleolar RNA-associated protein 10 (1712 aa).

HEAT repeat units lie at residues 164 to 202, 490 to 528, 564 to 605, 987 to 1025, 1236 to 1275, 1605 to 1646, and 1667 to 1705; these read EELV…GRGE, TCDF…ASGS, TLLS…PKHG, TQTI…AFEH, VISL…RFGK, EEVT…DSAA, and LGLL…VLGE.

The protein belongs to the HEATR1/UTP10 family. As to quaternary structure, component of the ribosomal small subunit (SSU) processome.

Its subcellular location is the nucleus. It localises to the nucleolus. In terms of biological role, involved in nucleolar processing of pre-18S ribosomal RNA. Involved in ribosome biosynthesis. This is U3 small nucleolar RNA-associated protein 10 from Phaeosphaeria nodorum (strain SN15 / ATCC MYA-4574 / FGSC 10173) (Glume blotch fungus).